The sequence spans 45 residues: Large ribosomal subunit protein bL34 (45 aa).

Residues 1 to 45 (MTKRTFQPNNRRRARKHGFRARMRTRAGRAILSARRGKNRAELSA) form a disordered region. Basic residues predominate over residues 10–27 (NRRRARKHGFRARMRTRA).

This sequence belongs to the bacterial ribosomal protein bL34 family.

The polypeptide is Large ribosomal subunit protein bL34 (Micrococcus luteus (strain ATCC 4698 / DSM 20030 / JCM 1464 / CCM 169 / CCUG 5858 / IAM 1056 / NBRC 3333 / NCIMB 9278 / NCTC 2665 / VKM Ac-2230) (Micrococcus lysodeikticus)).